We begin with the raw amino-acid sequence, 862 residues long: Probable disease resistance protein At5g43740 (862 aa).

The stretch at 24–61 forms a coiled coil; that stretch reads RNYIHMMESNLDALQKTMEELKNGRDDLLGRVSIEEDK. An NB-ARC domain is found at 135–438; sequence MVAQEIIHKV…CEGFINPNRY (304 aa). An ATP-binding site is contributed by 178-185; sequence GMGGVGKT. 4 LRR repeats span residues 511-532, 533-555, 558-580, and 582-604; these read IVRT…SKCP, NLST…FFRF, KLVV…ISNL, and SLQY…KKLR.

Belongs to the disease resistance NB-LRR family.

Its function is as follows. Probable disease resistance protein. This Arabidopsis thaliana (Mouse-ear cress) protein is Probable disease resistance protein At5g43740.